The primary structure comprises 216 residues: Phosphatidylserine decarboxylase proenzyme (216 aa).

Catalysis depends on serine 183, which acts as the Schiff-base intermediate with substrate; via pyruvic acid. Position 183 is a pyruvic acid (Ser); by autocatalysis (serine 183).

The protein belongs to the phosphatidylserine decarboxylase family. PSD-A subfamily. Heterodimer of a large membrane-associated beta subunit and a small pyruvoyl-containing alpha subunit. Requires pyruvate as cofactor. In terms of processing, is synthesized initially as an inactive proenzyme. Formation of the active enzyme involves a self-maturation process in which the active site pyruvoyl group is generated from an internal serine residue via an autocatalytic post-translational modification. Two non-identical subunits are generated from the proenzyme in this reaction, and the pyruvate is formed at the N-terminus of the alpha chain, which is derived from the carboxyl end of the proenzyme. The post-translation cleavage follows an unusual pathway, termed non-hydrolytic serinolysis, in which the side chain hydroxyl group of the serine supplies its oxygen atom to form the C-terminus of the beta chain, while the remainder of the serine residue undergoes an oxidative deamination to produce ammonia and the pyruvoyl prosthetic group on the alpha chain.

It is found in the cell membrane. It catalyses the reaction a 1,2-diacyl-sn-glycero-3-phospho-L-serine + H(+) = a 1,2-diacyl-sn-glycero-3-phosphoethanolamine + CO2. Its pathway is phospholipid metabolism; phosphatidylethanolamine biosynthesis; phosphatidylethanolamine from CDP-diacylglycerol: step 2/2. Functionally, catalyzes the formation of phosphatidylethanolamine (PtdEtn) from phosphatidylserine (PtdSer). This chain is Phosphatidylserine decarboxylase proenzyme, found in Cupriavidus taiwanensis (strain DSM 17343 / BCRC 17206 / CCUG 44338 / CIP 107171 / LMG 19424 / R1) (Ralstonia taiwanensis (strain LMG 19424)).